The chain runs to 97 residues: Cobalt transport protein CbiN (97 aa).

The next 2 membrane-spanning stretches (helical) occupy residues 6 to 26 (VLMI…YSGL) and 68 to 88 (SLLF…FFGY).

Belongs to the CbiN family. In terms of assembly, forms an energy-coupling factor (ECF) transporter complex composed of an ATP-binding protein (A component, CbiO), a transmembrane protein (T component, CbiQ) and 2 possible substrate-capture proteins (S components, CbiM and CbiN) of unknown stoichimetry.

Its subcellular location is the cell membrane. Its pathway is cofactor biosynthesis; adenosylcobalamin biosynthesis. In terms of biological role, part of the energy-coupling factor (ECF) transporter complex CbiMNOQ involved in cobalt import. This is Cobalt transport protein CbiN from Methanococcus maripaludis (strain C7 / ATCC BAA-1331).